Reading from the N-terminus, the 104-residue chain is Large ribosomal subunit protein uL24 (104 aa).

It belongs to the universal ribosomal protein uL24 family. Part of the 50S ribosomal subunit.

Its function is as follows. One of two assembly initiator proteins, it binds directly to the 5'-end of the 23S rRNA, where it nucleates assembly of the 50S subunit. Functionally, one of the proteins that surrounds the polypeptide exit tunnel on the outside of the subunit. This chain is Large ribosomal subunit protein uL24, found in Shewanella oneidensis (strain ATCC 700550 / JCM 31522 / CIP 106686 / LMG 19005 / NCIMB 14063 / MR-1).